We begin with the raw amino-acid sequence, 138 residues long: Large ribosomal subunit protein bL17 (138 aa).

The protein belongs to the bacterial ribosomal protein bL17 family. Part of the 50S ribosomal subunit. Contacts protein L32.

The sequence is that of Large ribosomal subunit protein bL17 from Dinoroseobacter shibae (strain DSM 16493 / NCIMB 14021 / DFL 12).